Consider the following 331-residue polypeptide: Ketol-acid reductoisomerase (NADP(+)) (331 aa).

One can recognise a KARI N-terminal Rossmann domain in the interval 4 to 183 (ATIYYDDDAE…GCTRAGVVET (180 aa)). NADP(+) is bound by residues 27–30 (YGSQ), arginine 50, serine 53, serine 55, and 85–88 (DTVQ). Residue histidine 109 is part of the active site. An NADP(+)-binding site is contributed by glycine 135. Residues 184–329 (TFREETETDL…EDLRALFAWG (146 aa)) form the KARI C-terminal knotted domain. Residues aspartate 192, glutamate 196, glutamate 228, and glutamate 232 each coordinate Mg(2+). Residue serine 253 participates in substrate binding.

It belongs to the ketol-acid reductoisomerase family. Requires Mg(2+) as cofactor.

The enzyme catalyses (2R)-2,3-dihydroxy-3-methylbutanoate + NADP(+) = (2S)-2-acetolactate + NADPH + H(+). It carries out the reaction (2R,3R)-2,3-dihydroxy-3-methylpentanoate + NADP(+) = (S)-2-ethyl-2-hydroxy-3-oxobutanoate + NADPH + H(+). It functions in the pathway amino-acid biosynthesis; L-isoleucine biosynthesis; L-isoleucine from 2-oxobutanoate: step 2/4. The protein operates within amino-acid biosynthesis; L-valine biosynthesis; L-valine from pyruvate: step 2/4. Its function is as follows. Involved in the biosynthesis of branched-chain amino acids (BCAA). Catalyzes an alkyl-migration followed by a ketol-acid reduction of (S)-2-acetolactate (S2AL) to yield (R)-2,3-dihydroxy-isovalerate. In the isomerase reaction, S2AL is rearranged via a Mg-dependent methyl migration to produce 3-hydroxy-3-methyl-2-ketobutyrate (HMKB). In the reductase reaction, this 2-ketoacid undergoes a metal-dependent reduction by NADPH to yield (R)-2,3-dihydroxy-isovalerate. This chain is Ketol-acid reductoisomerase (NADP(+)), found in Natronomonas pharaonis (strain ATCC 35678 / DSM 2160 / CIP 103997 / JCM 8858 / NBRC 14720 / NCIMB 2260 / Gabara) (Halobacterium pharaonis).